Consider the following 144-residue polypeptide: Bacilliredoxin BCE_4227 (144 aa).

It belongs to the bacilliredoxin family.

This chain is Bacilliredoxin BCE_4227, found in Bacillus cereus (strain ATCC 10987 / NRS 248).